A 406-amino-acid polypeptide reads, in one-letter code: Tubby-like F-box protein 11 (406 aa).

The region spanning 53-108 (SCWTQLPPELLREVLARVEESEGWWPRRRDVVACAGVCRSWRGIVREIVRTPEASG) is the F-box domain.

Belongs to the TUB family. Ubiquitous.

This chain is Tubby-like F-box protein 11 (TULP11), found in Oryza sativa subsp. japonica (Rice).